The following is a 142-amino-acid chain: uncharacterized protein (142 aa).

This is an uncharacterized protein from Invertebrate iridescent virus 3 (IIV-3).